A 349-amino-acid polypeptide reads, in one-letter code: Selenide, water dikinase (349 aa).

Cysteine 17 is a catalytic residue. ATP-binding positions include lysine 20 and 48–50 (MAD). Aspartate 51 contributes to the Mg(2+) binding site. Residues aspartate 68, aspartate 91, and 139–141 (GHS) each bind ATP. Aspartate 91 contributes to the Mg(2+) binding site. Aspartate 227 lines the Mg(2+) pocket.

The protein belongs to the selenophosphate synthase 1 family. Class I subfamily. In terms of assembly, homodimer. It depends on Mg(2+) as a cofactor.

The catalysed reaction is hydrogenselenide + ATP + H2O = selenophosphate + AMP + phosphate + 2 H(+). Functionally, synthesizes selenophosphate from selenide and ATP. In Rhizobium meliloti (strain 1021) (Ensifer meliloti), this protein is Selenide, water dikinase.